A 302-amino-acid chain; its full sequence is Probable 2-(5''-triphosphoribosyl)-3'-dephosphocoenzyme-A synthase 1 (302 aa).

It belongs to the CitG/MdcB family.

It catalyses the reaction 3'-dephospho-CoA + ATP = 2'-(5''-triphospho-alpha-D-ribosyl)-3'-dephospho-CoA + adenine. This Salmonella typhi protein is Probable 2-(5''-triphosphoribosyl)-3'-dephosphocoenzyme-A synthase 1.